The following is a 90-amino-acid chain: Translation initiation factor IF-1 (90 aa).

An S1-like domain is found at 7 to 76 (KEDVIRMEGT…TRGRIVYRKK (70 aa)).

Belongs to the IF-1 family. In terms of assembly, component of the 30S ribosomal translation pre-initiation complex which assembles on the 30S ribosome in the order IF-2 and IF-3, IF-1 and N-formylmethionyl-tRNA(fMet); mRNA recruitment can occur at any time during PIC assembly.

It localises to the cytoplasm. In terms of biological role, one of the essential components for the initiation of protein synthesis. Stabilizes the binding of IF-2 and IF-3 on the 30S subunit to which N-formylmethionyl-tRNA(fMet) subsequently binds. Helps modulate mRNA selection, yielding the 30S pre-initiation complex (PIC). Upon addition of the 50S ribosomal subunit IF-1, IF-2 and IF-3 are released leaving the mature 70S translation initiation complex. The polypeptide is Translation initiation factor IF-1 (Fervidobacterium nodosum (strain ATCC 35602 / DSM 5306 / Rt17-B1)).